Consider the following 300-residue polypeptide: UPF0282 protein TON_1363 (300 aa).

The protein belongs to the UPF0282 family.

This Thermococcus onnurineus (strain NA1) protein is UPF0282 protein TON_1363.